The chain runs to 41 residues: Bacteriocin bavaricin-A (41 aa).

This sequence belongs to the bacteriocin class IIA/YGNGV family.

The protein resides in the secreted. Its function is as follows. This heat stable bacteriocin shows activity against species of Lactobacillus, Listeria monocytogenes, Pediococcus, Enterococcus, Leuconostoc and Lactococcus. This is Bacteriocin bavaricin-A from Latilactobacillus sakei (Lactobacillus sakei).